Reading from the N-terminus, the 554-residue chain is DNA mismatch repair protein MutL (554 aa).

Belongs to the DNA mismatch repair MutL/HexB family.

Functionally, this protein is involved in the repair of mismatches in DNA. It is required for dam-dependent methyl-directed DNA mismatch repair. May act as a 'molecular matchmaker', a protein that promotes the formation of a stable complex between two or more DNA-binding proteins in an ATP-dependent manner without itself being part of a final effector complex. The polypeptide is DNA mismatch repair protein MutL (Crocosphaera subtropica (strain ATCC 51142 / BH68) (Cyanothece sp. (strain ATCC 51142))).